A 224-amino-acid chain; its full sequence is Elongation factor Ts (224 aa).

Positions T81–V84 are involved in Mg(2+) ion dislocation from EF-Tu.

This sequence belongs to the EF-Ts family.

It is found in the cytoplasm. Associates with the EF-Tu.GDP complex and induces the exchange of GDP to GTP. It remains bound to the aminoacyl-tRNA.EF-Tu.GTP complex up to the GTP hydrolysis stage on the ribosome. The chain is Elongation factor Ts from Finegoldia magna (strain ATCC 29328 / DSM 20472 / WAL 2508) (Peptostreptococcus magnus).